The following is a 130-amino-acid chain: MNLIAKLEQEEIERALAGKTIPDFAPGDTVIVNVNVVEGNRKRVQAYEGVVIAIRNRGLNSNFIVRKISSGEGVERTFQTYSPLLASIVVKRRGDVRRAKLYYLRERSGKSARIKEKLVSKDRAAAASQE.

This sequence belongs to the bacterial ribosomal protein bL19 family.

Functionally, this protein is located at the 30S-50S ribosomal subunit interface and may play a role in the structure and function of the aminoacyl-tRNA binding site. In Burkholderia orbicola (strain MC0-3), this protein is Large ribosomal subunit protein bL19.